The sequence spans 328 residues: uncharacterized protein (328 aa).

Belongs to the Gfo/Idh/MocA family.

This is an uncharacterized protein from Escherichia coli (strain K12).